A 273-amino-acid polypeptide reads, in one-letter code: Glutamate 5-kinase (273 aa).

Lys-15 contributes to the ATP binding site. Residues Ser-55, Asp-142, and Asn-158 each coordinate substrate. ATP-binding positions include 178-179 (SD) and 220-226 (TGGMLSK).

It belongs to the glutamate 5-kinase family.

It is found in the cytoplasm. The catalysed reaction is L-glutamate + ATP = L-glutamyl 5-phosphate + ADP. It functions in the pathway amino-acid biosynthesis; L-proline biosynthesis; L-glutamate 5-semialdehyde from L-glutamate: step 1/2. Functionally, catalyzes the transfer of a phosphate group to glutamate to form L-glutamate 5-phosphate. In Streptococcus pyogenes serotype M3 (strain ATCC BAA-595 / MGAS315), this protein is Glutamate 5-kinase.